A 113-amino-acid chain; its full sequence is Large ribosomal subunit protein bL19m (113 aa).

This sequence belongs to the bacterial ribosomal protein bL19 family.

The protein localises to the mitochondrion. The sequence is that of Large ribosomal subunit protein bL19m (RPL19) from Reclinomonas americana.